A 251-amino-acid chain; its full sequence is MSHLTTFLVFFLLAFVTYTYASGVFEVHNNCPYTVWAAATPVGGGRRLERGQSWWFWAPPGTKMARIWGRTNCNFDGAGRGWCQTGDCGGVLECKGWGKPPNTLAEYALNQFSNLDFWDISVIDGFNIPMSFGPTKPGPGKCHGIQCTANINGECPGSLRVPGGCNNPCTTFGGQQYCCTQGPCGPTELSRWFKQRCPDAYSYPQDDPTSTFTCTSWTTDYKVMFCPYGSAHNETTNFPLEMPTSTHEVAK.

Positions 1–21 (MSHLTTFLVFFLLAFVTYTYA) are cleaved as a signal peptide. 8 disulfide bridges follow: C31–C226, C73–C83, C88–C94, C142–C214, C147–C197, C155–C165, C169–C178, and C179–C184. N233 carries an N-linked (GlcNAc...) asparagine glycan.

This sequence belongs to the thaumatin family.

The protein is Osmotin-like protein (OLPA) of Nicotiana tabacum (Common tobacco).